The primary structure comprises 295 residues: N-acetylmuramic acid 6-phosphate etherase (295 aa).

The 164-residue stretch at 54–217 folds into the SIS domain; it reads VIASFRQGGR…STASMIGIGK (164 aa). The active-site Proton donor is the Glu82. The active site involves Glu113.

It belongs to the GCKR-like family. MurNAc-6-P etherase subfamily. As to quaternary structure, homodimer.

The enzyme catalyses N-acetyl-D-muramate 6-phosphate + H2O = N-acetyl-D-glucosamine 6-phosphate + (R)-lactate. The protein operates within amino-sugar metabolism; N-acetylmuramate degradation. Functionally, specifically catalyzes the cleavage of the D-lactyl ether substituent of MurNAc 6-phosphate, producing GlcNAc 6-phosphate and D-lactate. The polypeptide is N-acetylmuramic acid 6-phosphate etherase (Geobacillus sp. (strain WCH70)).